The sequence spans 463 residues: Chromosomal replication initiator protein DnaA (463 aa).

A domain I, interacts with DnaA modulators region spans residues 1-83 (MSLTLWQQCL…LRFEVGSKPV (83 aa)). Residues 83 to 126 (VAQAISQPVMVSAHASAPGVVSRPAPTRPSWDNVPALAELSYRS) form a domain II region. The tract at residues 127-343 (NVNTKHNFDN…GALNRVIANA (217 aa)) is domain III, AAA+ region. ATP contacts are provided by G171, G173, K174, and T175. The segment at 344–463 (NFTGRAITID…FSNLIRTLSS (120 aa)) is domain IV, binds dsDNA.

It belongs to the DnaA family. As to quaternary structure, oligomerizes as a right-handed, spiral filament on DNA at oriC.

Its subcellular location is the cytoplasm. Functionally, plays an essential role in the initiation and regulation of chromosomal replication. ATP-DnaA binds to the origin of replication (oriC) to initiate formation of the DNA replication initiation complex once per cell cycle. Binds the DnaA box (a 9 base pair repeat at the origin) and separates the double-stranded (ds)DNA. Forms a right-handed helical filament on oriC DNA; dsDNA binds to the exterior of the filament while single-stranded (ss)DNA is stabiized in the filament's interior. The ATP-DnaA-oriC complex binds and stabilizes one strand of the AT-rich DNA unwinding element (DUE), permitting loading of DNA polymerase. After initiation quickly degrades to an ADP-DnaA complex that is not apt for DNA replication. Binds acidic phospholipids. In Erwinia tasmaniensis (strain DSM 17950 / CFBP 7177 / CIP 109463 / NCPPB 4357 / Et1/99), this protein is Chromosomal replication initiator protein DnaA.